The following is a 147-amino-acid chain: Hemoglobin anodic subunit beta (147 aa).

Residues 2–147 enclose the Globin domain; the sequence is EWTEDERTAI…VTSALARQYH (146 aa). Residues histidine 63 and histidine 92 each coordinate heme b.

The protein belongs to the globin family. As to quaternary structure, heterotetramer of two alpha chains and two beta chains. In terms of tissue distribution, red blood cells.

In terms of biological role, involved in oxygen transport from gills to the various peripheral tissues. In Anguilla anguilla (European freshwater eel), this protein is Hemoglobin anodic subunit beta (hbb1).